Consider the following 511-residue polypeptide: GMP synthase [glutamine-hydrolyzing] (511 aa).

The 191-residue stretch at 5 to 195 (IVIVLDFGGQ…LFNICGCKGD (191 aa)) folds into the Glutamine amidotransferase type-1 domain. Catalysis depends on cysteine 82, which acts as the Nucleophile. Active-site residues include histidine 169 and glutamate 171. The region spanning 196 to 386 (WKTSSFIEER…LGIPEKIVKR (191 aa)) is the GMPS ATP-PPase domain. 223–229 (SGGVDSS) serves as a coordination point for ATP.

In terms of assembly, homodimer.

The catalysed reaction is XMP + L-glutamine + ATP + H2O = GMP + L-glutamate + AMP + diphosphate + 2 H(+). The protein operates within purine metabolism; GMP biosynthesis; GMP from XMP (L-Gln route): step 1/1. Its function is as follows. Catalyzes the synthesis of GMP from XMP. This chain is GMP synthase [glutamine-hydrolyzing], found in Caldicellulosiruptor saccharolyticus (strain ATCC 43494 / DSM 8903 / Tp8T 6331).